The chain runs to 112 residues: 2Fe-2S ferredoxin (112 aa).

The 2Fe-2S ferredoxin-type domain occupies 5 to 107; the sequence is IKVTFIVNDG…GIKVRLPSAT (103 aa). [2Fe-2S] cluster-binding residues include C42, C48, C51, and C88.

Belongs to the adrenodoxin/putidaredoxin family. [2Fe-2S] cluster serves as cofactor.

Functionally, ferredoxin are iron-sulfur proteins that transfer electrons in a wide variety of metabolic reactions. In Rickettsia felis (strain ATCC VR-1525 / URRWXCal2) (Rickettsia azadi), this protein is 2Fe-2S ferredoxin (fdxB).